A 513-amino-acid polypeptide reads, in one-letter code: Probable vesicular acetylcholine transporter-A (513 aa).

Residues 1–39 (MATEESGGLAQTAAVKLSEMGERTKQLGNAIQDPERQRR) lie on the Cytoplasmic side of the membrane. Residues 40-60 (IILVIVCVALLLDNMLYMVIV) form a helical membrane-spanning segment. The Lumenal, vesicle portion of the chain corresponds to 61–98 (PIVPDYLAHLESESEQAHVKGNSSINITQNENFDLQIG). N-linked (GlcNAc...) asparagine glycans are attached at residues asparagine 82 and asparagine 86. A helical membrane pass occupies residues 99–119 (VLFASKAILQLLVNPLTGTFI). Residues 120–125 (DRVGYD) are Cytoplasmic-facing. A helical membrane pass occupies residues 126–146 (IPLLIGLSIMFVSTCIFAFAE). Over 147 to 156 (NYATLFMARS) the chain is Lumenal, vesicle. A helical transmembrane segment spans residues 157–174 (LQGLGSAFADTSGIAMIA). The Cytoplasmic portion of the chain corresponds to 175–186 (DKYAEESERSRA). Residues 187–207 (LGIALAFISFGSLAAPPFGGV) form a helical membrane-spanning segment. At 208–215 (LYEFAGKR) the chain is on the lumenal, vesicle side. Residues 216–236 (FPFIALACVCLADGILCLTVL) form a helical membrane-spanning segment. Over 237-257 (KPFSSRTRENMPVGTPIYKLM) the chain is Cytoplasmic. Residues 258–278 (IDPYIAVVAGALTTCNIPLAF) form a helical membrane-spanning segment. The Lumenal, vesicle portion of the chain corresponds to 279–296 (LEPTIANWMEETMNASQW). Residue asparagine 292 is glycosylated (N-linked (GlcNAc...) asparagine). A helical transmembrane segment spans residues 297–317 (QIGITWLPAFFPHILGVYLTV). Residues 318 to 327 (KLAAKYPHLQ) lie on the Cytoplasmic side of the membrane. A helical membrane pass occupies residues 328-348 (WFYGALGMVIIGASSCIVPAC). Residues 349-353 (KNFEQ) lie on the Lumenal, vesicle side of the membrane. The chain crosses the membrane as a helical span at residues 354–374 (LIIPLCGVCFGIALVDTALLP). The Cytoplasmic segment spans residues 375 to 390 (TLAFLVDVRHVSVYGS). A helical transmembrane segment spans residues 391-411 (VYAIADISYCVAYALGPIVAG). Over 412–418 (KIVHDLG) the chain is Lumenal, vesicle. A helical membrane pass occupies residues 419–439 (FVQLNLGMGLANVLYAPALLL). Topologically, residues 440-513 (LRNVSLMKPS…EEETSEPEYI (74 aa)) are cytoplasmic. Positions 475-513 (RKKHGYSSSGNCVPIDENGTFAGQSKSFSEEETSEPEYI) are disordered. Positions 504–513 (EEETSEPEYI) are enriched in acidic residues.

It belongs to the major facilitator superfamily. Vesicular transporter family.

The protein resides in the membrane. In terms of biological role, involved in acetylcholine transport into synaptic vesicles. The protein is Probable vesicular acetylcholine transporter-A of Danio rerio (Zebrafish).